The primary structure comprises 365 residues: MSEADQLKALRVRIDSLDERILDLISERARCAQEVARVKTASWPKAEEAVFYRPEREAWVLKHIMELNKGPLDNEEMARLFREIMSSCLALEQPLRVAYLGPEGTFSQAAALKHFGHSVISKPMAAIDEVFREVVAGAVNFGVVPVENSTEGAVNHTLDSFLEHDIVICGEVELRIHHHLLVGETTKTDRITRIYSHAQSLAQCRKWLDAHYPNVERVAVSSNADAAKRVKSEWNSAAIAGDMAAQLYGLSKLAEKIEDRPVNSTRFLIIGSQEVPPTGDDKTSIIVSMRNKPGALHELLMPFHSNGIDLTRIETRPSRSGKWTYVFFIDCMGHHQDPLIKNVLEKIGHEAVALKVLGSYPKAVL.

A Chorismate mutase domain is found at 1–96 (MSEADQLKAL…SCLALEQPLR (96 aa)). Substrate contacts are provided by Arg11, Arg28, Lys39, and Glu57. Positions 97–272 (VAYLGPEGTF…NSTRFLIIGS (176 aa)) constitute a Prephenate dehydratase domain. The ACT domain occupies 284–361 (SIIVSMRNKP…VALKVLGSYP (78 aa)).

It is found in the cytoplasm. It carries out the reaction chorismate = prephenate. The enzyme catalyses prephenate + H(+) = 3-phenylpyruvate + CO2 + H2O. It functions in the pathway amino-acid biosynthesis; L-phenylalanine biosynthesis; phenylpyruvate from prephenate: step 1/1. It participates in metabolic intermediate biosynthesis; prephenate biosynthesis; prephenate from chorismate: step 1/1. Catalyzes the Claisen rearrangement of chorismate to prephenate and the decarboxylation/dehydration of prephenate to phenylpyruvate. This Stutzerimonas stutzeri (Pseudomonas stutzeri) protein is Bifunctional chorismate mutase/prephenate dehydratase.